The following is a 395-amino-acid chain: MNFQRMTDLNLAGKRVLIREDLNVPVKNGVITSDARLRAALPTIKAALEKGAAVMVFSHLGRPVEGEPKPEQSLALVAAYLTEALGQEVKLFTDYLDGVEVEAGQVVLLENVRFNPGEKKNNPELAQKYAALCDVFVMDAFGTAHRAEASTEGVARFAPVAAAGPLLAAELDALGRAMQTPEKPMVAIVAGSKVSTKLDVLNSLSGICDQLIVGGGIANTFLAAAGYNVGKSLYEADLVETAKQIAAKVSVPLPTDVVVADASQINFEDFLGSLAAAQAVIKKVEDVTANDMILDVGPETAKAFANILTTSKTILWNGPVGVFEVDQFGEGTKALSLAVAQSDAFSIAGGGDTLAAIDKYNVADQIGYISTGGGAFLEFVEGKTLPAVAVLLERA.

Substrate contacts are provided by residues 21–23 (DLN), arginine 36, 59–62 (HLGR), arginine 113, and arginine 146. ATP is bound by residues lysine 197, glutamate 324, and 350-353 (GGDT).

Belongs to the phosphoglycerate kinase family. As to quaternary structure, monomer.

Its subcellular location is the cytoplasm. The enzyme catalyses (2R)-3-phosphoglycerate + ATP = (2R)-3-phospho-glyceroyl phosphate + ADP. It participates in carbohydrate degradation; glycolysis; pyruvate from D-glyceraldehyde 3-phosphate: step 2/5. The protein is Phosphoglycerate kinase of Acinetobacter baumannii (strain ATCC 17978 / DSM 105126 / CIP 53.77 / LMG 1025 / NCDC KC755 / 5377).